The following is a 73-amino-acid chain: Venom peptide La1 (73 aa).

A Lysine amide modification is found at lysine 73.

The protein belongs to the scorpion La1-like peptide family. In terms of processing, contains 4 disulfide bonds. As to expression, expressed by the venom gland.

It localises to the secreted. In terms of biological role, not toxic to insect. In Liocheles australasiae (Dwarf wood scorpion), this protein is Venom peptide La1.